The primary structure comprises 123 residues: Testis-expressed protein 12 (123 aa).

Residues M1–S41 are disordered. Basic and acidic residues predominate over residues V7 to E21. The segment covering S31–S41 has biased composition (low complexity).

As to quaternary structure, interacts with SYCE2. As to expression, testis (at protein level). Detected in ovary. Expressed in both male and female germ cells.

It localises to the chromosome. Component of the transverse central element of synaptonemal complexes (SCS), formed between homologous chromosomes during meiotic prophase. Requires SYCP1 in order to be incorporated into the central element. The chain is Testis-expressed protein 12 (Tex12) from Mus musculus (Mouse).